Consider the following 531-residue polypeptide: Polypyrimidine tract-binding protein 2 (531 aa).

The residue at position 1 (Met1) is an N-acetylmethionine. Phosphoserine occurs at positions 26 and 27. RRM domains are found at residues 59 to 133 (RVLH…YSNH) and 181 to 257 (LRII…FSKL). Ser308 is modified (phosphoserine). RRM domains lie at 338–412 (TVLL…LSKH) and 455–529 (ATLH…FSKS).

Monomer. Interacts with NOVA1; the interaction is direct. Identified in a mRNP complex, at least composed of DHX9, DDX3X, ELAVL1, HNRNPU, IGF2BP1, ILF3, PABPC1, PCBP2, PTBP2, STAU1, STAU2, SYNCRIP and YBX1. Part of a ternary complex containing KHSRP and HNRPH1. Interacts with NOVA2; the interaction is direct. As to expression, mainly expressed in brain although also detected in other tissues like heart and skeletal muscle. Isoform 1 and isoform 2 are specifically expressed in neuronal tissues. Isoform 3 and isoform 4 are expressed in non-neuronal tissues. Isoform 5 and isoform 6 are truncated forms expressed in non-neuronal tissues.

It is found in the nucleus. In terms of biological role, RNA-binding protein which binds to intronic polypyrimidine tracts and mediates negative regulation of exons splicing. May antagonize in a tissue-specific manner the ability of NOVA1 to activate exon selection. In addition to its function in pre-mRNA splicing, plays also a role in the regulation of translation. Reduced affinity for RNA. This Homo sapiens (Human) protein is Polypyrimidine tract-binding protein 2.